We begin with the raw amino-acid sequence, 130 residues long: uncharacterized protein (130 aa).

Asn-102 carries N-linked (GlcNAc...) asparagine glycosylation. A helical transmembrane segment spans residues 110–130; sequence DPLAFYLMFLIIITILLIMIL.

It is found in the membrane. This is an uncharacterized protein from Dictyostelium discoideum (Social amoeba).